Reading from the N-terminus, the 655-residue chain is Ribonuclease 3 (655 aa).

Disordered stretches follow at residues 1–148 and 171–376; these read MENL…NSEK and LIAP…NIPL. The unknown stretch occupies residues 1–400; that stretch reads MENLEKNTKK…NYIKDNYPVI (400 aa). Basic residues predominate over residues 8-20; it reads TKKKIKKPNNFKK. 2 stretches are compositionally biased toward basic and acidic residues: residues 21 to 34 and 69 to 89; these read NNKD…DKPT and DYEK…RSDE. Residues 92–102 are compositionally biased toward low complexity; that stretch reads NNNSKKQNNNK. Over residues 103-115 the composition is skewed to basic residues; sequence QAKKKANKNKKQK. Over residues 135 to 148 the composition is skewed to polar residues; sequence AANNQVKAIPNSEK. The segment covering 206 to 223 has biased composition (low complexity); that stretch reads NNFVNNQKNHNKNNAGNK. Composition is skewed to polar residues over residues 229–242 and 250–259; these read PTKP…SKST and PNFTSNQPKP. 2 stretches are compositionally biased toward basic and acidic residues: residues 260–274 and 298–309; these read TQKE…KKAE and DQTKKKQPKENK. Residues 310–332 are compositionally biased toward low complexity; that stretch reads NQQIKAVNLNNNQQKTNNNNQKN. A compositionally biased stretch (basic and acidic residues) spans 333–350; that stretch reads SVDKSENDNNKKKSEANQ. Positions 351 to 360 are enriched in low complexity; sequence KQENLNPNNN. The interval 401–655 is RNase 3; that stretch reads YADLKEKNRL…KFRGLLKLEK (255 aa). In terms of domain architecture, RNase III spans 432–556; it reads LELLLKKFKV…FIGAMYLDQG (125 aa). Glutamate 472 is a binding site for Mg(2+). The active site involves aspartate 476. Residues aspartate 542 and glutamate 545 each contribute to the Mg(2+) site. The active site involves glutamate 545. In terms of domain architecture, DRBM spans 582–649; that stretch reads DYKSIFQEII…AKEAISKFRG (68 aa).

The protein belongs to the ribonuclease III family. As to quaternary structure, homodimer. Mg(2+) serves as cofactor.

The protein resides in the cytoplasm. The catalysed reaction is Endonucleolytic cleavage to 5'-phosphomonoester.. Digests double-stranded RNA. Involved in the processing of primary rRNA transcript to yield the immediate precursors to the large and small rRNAs (23S and 16S). Processes some mRNAs, and tRNAs when they are encoded in the rRNA operon. Processes pre-crRNA and tracrRNA of type II CRISPR loci if present in the organism. The protein is Ribonuclease 3 (rnc) of Mycoplasmoides gallisepticum (strain R(low / passage 15 / clone 2)) (Mycoplasma gallisepticum).